Here is a 278-residue protein sequence, read N- to C-terminus: Ras-related protein Rab-40A-like (278 aa).

GTP contacts are provided by G26, K27, and S28. S28 is a Mg(2+) binding site. Residues 41-49 (SPYSHLGGI) form a switch-I region. D69 lines the Mg(2+) pocket. Residues G72, N126, and R127 each coordinate GTP. The tract at residues 72-88 (GQGRFCTIFRSYSRGAQ) is switch-II. Positions 175 to 228 (LLRHRLNWLGRPSKVLSLQDLCCRTIVSCTPVHLVDKLPLPIALRSHLKSFSMA) constitute an SOCS box domain. C270 carries the S-palmitoyl cysteine lipid modification. Residue C275 is the site of S-geranylgeranyl cysteine attachment.

This sequence belongs to the small GTPase superfamily. Rab family. Mg(2+) serves as cofactor. As to expression, expressed in brain, lung, heart, skeletal muscle, kidney and liver. Highest expression in brain. Expressed in fetal brain and kidney.

It localises to the membrane. Its subcellular location is the cytoplasm. The protein resides in the mitochondrion. The enzyme catalyses GTP + H2O = GDP + phosphate + H(+). It participates in protein modification; protein ubiquitination. With respect to regulation, regulated by guanine nucleotide exchange factors (GEFs) which promote the exchange of bound GDP for free GTP. Regulated by GTPase activating proteins (GAPs) which increase the GTP hydrolysis activity. Inhibited by GDP dissociation inhibitors (GDIs). Its function is as follows. May act as substrate-recognition component of the ECS(RAB40) E3 ubiquitin ligase complex which mediates the ubiquitination and subsequent proteasomal degradation of target proteins. The Rab40 subfamily belongs to the Rab family that are key regulators of intracellular membrane trafficking, from the formation of transport vesicles to their fusion with membranes. Rabs cycle between an inactive GDP-bound form and an active GTP-bound form that is able to recruit to membranes different sets of downstream effectors directly responsible for vesicle formation, movement, tethering and fusion. The polypeptide is Ras-related protein Rab-40A-like (Homo sapiens (Human)).